The primary structure comprises 382 residues: Chaperone protein DnaJ (382 aa).

The 66-residue stretch at 5-70 (DYYDLLGLSK…DKRAAYDRYG (66 aa)) folds into the J domain. A CR-type zinc finger spans residues 138–216 (GTKVPINYVT…CSGSGRVRDE (79 aa)). C151, C154, C168, C171, C190, C193, C204, and C207 together coordinate Zn(2+). CXXCXGXG motif repeat units follow at residues 151-158 (CSSCSGSG), 168-175 (CNTCHGAG), 190-197 (CHVCNGEG), and 204-211 (CKKCSGSG).

Belongs to the DnaJ family. Homodimer. It depends on Zn(2+) as a cofactor.

The protein localises to the cytoplasm. In terms of biological role, participates actively in the response to hyperosmotic and heat shock by preventing the aggregation of stress-denatured proteins and by disaggregating proteins, also in an autonomous, DnaK-independent fashion. Unfolded proteins bind initially to DnaJ; upon interaction with the DnaJ-bound protein, DnaK hydrolyzes its bound ATP, resulting in the formation of a stable complex. GrpE releases ADP from DnaK; ATP binding to DnaK triggers the release of the substrate protein, thus completing the reaction cycle. Several rounds of ATP-dependent interactions between DnaJ, DnaK and GrpE are required for fully efficient folding. Also involved, together with DnaK and GrpE, in the DNA replication of plasmids through activation of initiation proteins. The protein is Chaperone protein DnaJ of Ehrlichia ruminantium (strain Gardel).